A 181-amino-acid polypeptide reads, in one-letter code: Large ribosomal subunit protein uL5 (181 aa).

Belongs to the universal ribosomal protein uL5 family. Part of the 50S ribosomal subunit; part of the 5S rRNA/L5/L18/L25 subcomplex. Contacts the 5S rRNA and the P site tRNA. Forms a bridge to the 30S subunit in the 70S ribosome.

Its function is as follows. This is one of the proteins that bind and probably mediate the attachment of the 5S RNA into the large ribosomal subunit, where it forms part of the central protuberance. In the 70S ribosome it contacts protein S13 of the 30S subunit (bridge B1b), connecting the 2 subunits; this bridge is implicated in subunit movement. Contacts the P site tRNA; the 5S rRNA and some of its associated proteins might help stabilize positioning of ribosome-bound tRNAs. The sequence is that of Large ribosomal subunit protein uL5 from Helicobacter pylori (strain ATCC 700392 / 26695) (Campylobacter pylori).